The chain runs to 347 residues: GMP reductase (347 aa).

Residue Ala108–Ala131 coordinates NADP(+). K(+) is bound by residues Gly181 and Gly183. Cys186 (thioimidate intermediate) is an active-site residue. Ile216–Val239 provides a ligand contact to NADP(+).

The protein belongs to the IMPDH/GMPR family. GuaC type 1 subfamily. In terms of assembly, homotetramer.

The enzyme catalyses IMP + NH4(+) + NADP(+) = GMP + NADPH + 2 H(+). In terms of biological role, catalyzes the irreversible NADPH-dependent deamination of GMP to IMP. It functions in the conversion of nucleobase, nucleoside and nucleotide derivatives of G to A nucleotides, and in maintaining the intracellular balance of A and G nucleotides. The polypeptide is GMP reductase (Escherichia coli (strain SMS-3-5 / SECEC)).